Consider the following 204-residue polypeptide: MEAQAQGLLETEPLQGRDGDAVGSADFSSMLSEEEKEELKAELIQLEDEITTLRQVLSAKERHLVEIKQKLGMNLMNELKQNFSRSWHDMQTTTAYKKTHETLSHAGQKATAAFNNVGTAISKKFGDMRYSIRHSISMPAMRNSSTFKSFEERVETTVASLKTKVGGTNHGGGSFEEVLNSTAHASSQNASAGSRQTKDEELQC.

Residues 1 to 31 form a disordered region; the sequence is MEAQAQGLLETEPLQGRDGDAVGSADFSSML. Positions 22–73 form a coiled coil; it reads VGSADFSSMLSEEEKEELKAELIQLEDEITTLRQVLSAKERHLVEIKQKLGM. 4 positions are modified to phosphoserine: Ser-29, Ser-86, Ser-122, and Ser-131. Arg-133 is modified (omega-N-methylarginine). Phosphothreonine is present on Thr-146. A phosphoserine mark is found at Ser-149 and Ser-174. Residues 164-204 form a disordered region; it reads KVGGTNHGGGSFEEVLNSTAHASSQNASAGSRQTKDEELQC. Residues 179–195 are compositionally biased toward polar residues; the sequence is LNSTAHASSQNASAGSR.

Belongs to the TPD52 family. As to quaternary structure, forms a homodimer or heterodimer with other members of the family.

This chain is Tumor protein D53 (Tpd52l1), found in Mus musculus (Mouse).